Consider the following 749-residue polypeptide: Patatin-like phospholipase domain-containing protein AN0408 (749 aa).

The span at 1-11 (MEKSAAGDNID) shows a compositional bias: basic and acidic residues. The disordered stretch occupies residues 1 to 21 (MEKSAAGDNIDKYSPSSIPDY). A helical membrane pass occupies residues 92 to 112 (WPFLLFVLGWITFLSVGYALT). The PNPLA domain maps to 280-471 (LCLSGGATFA…RTDIPIKALN (192 aa)). The GXSXG motif lies at 311–315 (GTSGG). Ser313 acts as the Nucleophile in catalysis. Asp458 acts as the Proton acceptor in catalysis. A disordered region spans residues 630-659 (SIQPFPFDNGAAGADQKSNDPREERLNRNF). The span at 646–659 (KSNDPREERLNRNF) shows a compositional bias: basic and acidic residues.

Belongs to the PLPL family.

The protein localises to the membrane. Probable lipid hydrolase. This chain is Patatin-like phospholipase domain-containing protein AN0408, found in Emericella nidulans (strain FGSC A4 / ATCC 38163 / CBS 112.46 / NRRL 194 / M139) (Aspergillus nidulans).